The sequence spans 314 residues: HTH-type transcriptional regulator LeuO (314 aa).

The HTH lysR-type domain maps to 22–79; that stretch reads VDLNLLTVFDAVMQEQNITRAAHVLGMSQPAVSNAVARLKVMFNDELFVRYGRGIQPT. The segment at residues 39 to 58 is a DNA-binding region (H-T-H motif); that stretch reads ITRAAHVLGMSQPAVSNAVA.

It belongs to the LysR transcriptional regulatory family.

In terms of biological role, a global transcription factor. Activates transcription of the 9 following operons; yjjQ-bglJ, yjjP, acrEF, ybdO, yjcRQP, casABCDE12, rhsD-ybbC, fepE and gltF, in most cases it probably interferes with silencing by H-NS and activates transcription. Represses transcription of the 3 following operons; uxaCA, sdaCB and btsT. H-NS repression of the bgl operon, leading to the ability to metabolize some beta-glucosides. It also directly activates the bgl operon. Activation is H-NS and BglJ-RcsB independent. This is HTH-type transcriptional regulator LeuO (leuO) from Escherichia coli (strain K12).